Here is a 178-residue protein sequence, read N- to C-terminus: ATP synthase subunit delta (178 aa).

This sequence belongs to the ATPase delta chain family. In terms of assembly, F-type ATPases have 2 components, F(1) - the catalytic core - and F(0) - the membrane proton channel. F(1) has five subunits: alpha(3), beta(3), gamma(1), delta(1), epsilon(1). F(0) has three main subunits: a(1), b(2) and c(10-14). The alpha and beta chains form an alternating ring which encloses part of the gamma chain. F(1) is attached to F(0) by a central stalk formed by the gamma and epsilon chains, while a peripheral stalk is formed by the delta and b chains.

The protein localises to the cell inner membrane. F(1)F(0) ATP synthase produces ATP from ADP in the presence of a proton or sodium gradient. F-type ATPases consist of two structural domains, F(1) containing the extramembraneous catalytic core and F(0) containing the membrane proton channel, linked together by a central stalk and a peripheral stalk. During catalysis, ATP synthesis in the catalytic domain of F(1) is coupled via a rotary mechanism of the central stalk subunits to proton translocation. Its function is as follows. This protein is part of the stalk that links CF(0) to CF(1). It either transmits conformational changes from CF(0) to CF(1) or is implicated in proton conduction. In Hydrogenovibrio crunogenus (strain DSM 25203 / XCL-2) (Thiomicrospira crunogena), this protein is ATP synthase subunit delta.